Reading from the N-terminus, the 92-residue chain is Large ribosomal subunit protein bL25 (92 aa).

It belongs to the bacterial ribosomal protein bL25 family. In terms of assembly, part of the 50S ribosomal subunit; part of the 5S rRNA/L5/L18/L25 subcomplex. Contacts the 5S rRNA. Binds to the 5S rRNA independently of L5 and L18.

Functionally, this is one of the proteins that binds to the 5S RNA in the ribosome where it forms part of the central protuberance. The protein is Large ribosomal subunit protein bL25 of Vibrio campbellii (strain ATCC BAA-1116).